The primary structure comprises 182 residues: uncharacterized protein (182 aa).

Positions 1 to 177 constitute a Macro domain; it reads MEFSVGGVEV…KFLEVFKKHL (177 aa).

This is an uncharacterized protein from Pyrobaculum aerophilum (strain ATCC 51768 / DSM 7523 / JCM 9630 / CIP 104966 / NBRC 100827 / IM2).